The sequence spans 103 residues: NADH-quinone oxidoreductase subunit K 1 (103 aa).

Transmembrane regions (helical) follow at residues 7–27, 31–51, and 63–83; these read ISWFLTLSAILFALGVAGFLF, IITVFMSIELMLNAVNLSFVT, and LFTFFVMVVAAAEAAVGLAII.

This sequence belongs to the complex I subunit 4L family. In terms of assembly, NDH-1 is composed of 14 different subunits. Subunits NuoA, H, J, K, L, M, N constitute the membrane sector of the complex.

The protein resides in the cell inner membrane. The catalysed reaction is a quinone + NADH + 5 H(+)(in) = a quinol + NAD(+) + 4 H(+)(out). NDH-1 shuttles electrons from NADH, via FMN and iron-sulfur (Fe-S) centers, to quinones in the respiratory chain. The immediate electron acceptor for the enzyme in this species is believed to be ubiquinone. Couples the redox reaction to proton translocation (for every two electrons transferred, four hydrogen ions are translocated across the cytoplasmic membrane), and thus conserves the redox energy in a proton gradient. The chain is NADH-quinone oxidoreductase subunit K 1 from Solibacter usitatus (strain Ellin6076).